Consider the following 77-residue polypeptide: Large ribosomal subunit protein bL28 (77 aa).

The protein belongs to the bacterial ribosomal protein bL28 family.

The polypeptide is Large ribosomal subunit protein bL28 (Dechloromonas aromatica (strain RCB)).